A 109-amino-acid chain; its full sequence is Oncomodulin-2 (109 aa).

EF-hand domains are found at residues 39–74 and 78–109; these read MSASQVKDVFRFIDNDQSGYLDEEELKFFLQKFESG and LTESETKSLMAAADNDGDGKIGAEEFQEMVHS. Residues Asp-52, Asp-54, Ser-56, Tyr-58, Glu-63, Asp-91, Asp-93, Asp-95, Lys-97, and Glu-102 each coordinate Ca(2+).

Belongs to the parvalbumin family.

The sequence is that of Oncomodulin-2 (OCM2) from Homo sapiens (Human).